Reading from the N-terminus, the 454-residue chain is MSFVPGQENAGSRSSSGSRSGNGILKKTTWADQTERAGNNGNRGRRNQPKQTATTQPNSGSVVPHYSWFSGITQFQKGKEFQFVQGQGVPIANGIPASEQKGYWYRHNRRSFKTPDGQQKQLLPRWYFYYLGTGPHAGAEYGDDIEGVVWVASQQADTKTTADIVERDPSSHEAIPTRFAPGTVLPQGFYVEGSGRSAPASRSGSRSQSRGPNNRARSSSNQRQPASTVKPDMAEEIAALVLAKLGKDAGQPKQVTKQSAKEVRQKILNKPRQKRTPNKQCPVQQCFGKRGPNQNFGGSEMLKLGTSDPQFPILAELAPTAGAFFFGSKLELVKKNSGGADEPTKDVYELQYSGAVRFDSTLPGFETIMKVLNENLNAYQKDGGADVVSPKPQRKGRRQAQEKKDEVDNVSVAKPKSSVQRNVSRELTPEDRSLLAQILDDGVVPDGLEDDSNV.

Positions 1–62 (MSFVPGQENA…ATTQPNSGSV (62 aa)) are disordered. The segment covering 11-21 (GSRSSSGSRSG) has biased composition (low complexity). The segment covering 49-61 (PKQTATTQPNSGS) has biased composition (polar residues). Positions 56–197 (QPNSGSVVPH…GFYVEGSGRS (142 aa)) are RNA-binding. In terms of domain architecture, CoV N NTD spans 64–193 (PHYSWFSGIT…VLPQGFYVEG (130 aa)). Arg-109, Arg-125, and Arg-167 together coordinate RNA. 3 disordered regions span residues 159–230 (KTTA…STVK), 249–292 (AGQP…KRGP), and 382–428 (DGGA…RELT). Ser-170 carries the post-translational modification Phosphoserine; by host. Residue Thr-177 is modified to Phosphothreonine; by host. Residues 193-212 (GSGRSAPASRSGSRSQSRGP) show a composition bias toward low complexity. A Phosphoserine; by host modification is found at Ser-194. Over residues 215 to 227 (RARSSSNQRQPAS) the composition is skewed to polar residues. One can recognise a CoV N CTD domain in the interval 260 to 383 (AKEVRQKILN…ENLNAYQKDG (124 aa)). Positions 267-277 (ILNKPRQKRTP) are enriched in basic residues. The segment at 267 to 383 (ILNKPRQKRT…ENLNAYQKDG (117 aa)) is dimerization. 2 positions are modified to phosphoserine; by host: Ser-389 and Ser-424. At Thr-428 the chain carries Phosphothreonine; by host.

Belongs to the betacoronavirus nucleocapsid protein family. In terms of assembly, homooligomer. Both monomeric and oligomeric forms interact with RNA. Interacts with protein M. Interacts with NSP3; this interaction serves to tether the genome to the newly translated replicase-transcriptase complex at a very early stage of infection. ADP-ribosylated. The ADP-ribosylation is retained in the virion during infection. Post-translationally, phosphorylated on serine and threonine residues.

Its subcellular location is the virion. The protein localises to the host endoplasmic reticulum-Golgi intermediate compartment. The protein resides in the host Golgi apparatus. Functionally, packages the positive strand viral genome RNA into a helical ribonucleocapsid (RNP) and plays a fundamental role during virion assembly through its interactions with the viral genome and membrane protein M. Plays an important role in enhancing the efficiency of subgenomic viral RNA transcription as well as viral replication. The chain is Nucleoprotein from Murine coronavirus (strain S) (MHV-S).